The primary structure comprises 165 residues: uncharacterized protein (165 aa).

The protein belongs to the IIV-6 196R family.

This is an uncharacterized protein from Invertebrate iridescent virus 3 (IIV-3).